The primary structure comprises 207 residues: 3-isopropylmalate dehydratase small subunit (207 aa).

It belongs to the LeuD family. LeuD type 1 subfamily. As to quaternary structure, heterodimer of LeuC and LeuD.

It carries out the reaction (2R,3S)-3-isopropylmalate = (2S)-2-isopropylmalate. The protein operates within amino-acid biosynthesis; L-leucine biosynthesis; L-leucine from 3-methyl-2-oxobutanoate: step 2/4. Its function is as follows. Catalyzes the isomerization between 2-isopropylmalate and 3-isopropylmalate, via the formation of 2-isopropylmaleate. In Acidithiobacillus ferrooxidans (strain ATCC 23270 / DSM 14882 / CIP 104768 / NCIMB 8455) (Ferrobacillus ferrooxidans (strain ATCC 23270)), this protein is 3-isopropylmalate dehydratase small subunit.